The primary structure comprises 333 residues: Phenylalanine--tRNA ligase alpha subunit (333 aa).

A Mg(2+)-binding site is contributed by Glu254.

It belongs to the class-II aminoacyl-tRNA synthetase family. Phe-tRNA synthetase alpha subunit type 1 subfamily. Tetramer of two alpha and two beta subunits. The cofactor is Mg(2+).

The protein resides in the cytoplasm. The enzyme catalyses tRNA(Phe) + L-phenylalanine + ATP = L-phenylalanyl-tRNA(Phe) + AMP + diphosphate + H(+). This Xylella fastidiosa (strain 9a5c) protein is Phenylalanine--tRNA ligase alpha subunit (pheS).